The sequence spans 443 residues: Histidinol dehydrogenase (443 aa).

NAD(+)-binding residues include Y133, Q191, and N214. 3 residues coordinate substrate: S240, Q262, and H265. Zn(2+) is bound by residues Q262 and H265. Residues E329 and H330 each act as proton acceptor in the active site. Positions 330, 363, 417, and 422 each coordinate substrate. D363 contributes to the Zn(2+) binding site. H422 provides a ligand contact to Zn(2+).

The protein belongs to the histidinol dehydrogenase family. As to quaternary structure, homodimer. Zn(2+) is required as a cofactor.

The catalysed reaction is L-histidinol + 2 NAD(+) + H2O = L-histidine + 2 NADH + 3 H(+). It functions in the pathway amino-acid biosynthesis; L-histidine biosynthesis; L-histidine from 5-phospho-alpha-D-ribose 1-diphosphate: step 9/9. Catalyzes the sequential NAD-dependent oxidations of L-histidinol to L-histidinaldehyde and then to L-histidine. This chain is Histidinol dehydrogenase, found in Blochmanniella pennsylvanica (strain BPEN).